Reading from the N-terminus, the 191-residue chain is Thymidylate kinase (191 aa).

7 to 14 (GVDGAGKS) contributes to the ATP binding site.

This sequence belongs to the thymidylate kinase family.

The enzyme catalyses dTMP + ATP = dTDP + ADP. Phosphorylation of dTMP to form dTDP in both de novo and salvage pathways of dTTP synthesis. In Helicobacter pylori (strain Shi470), this protein is Thymidylate kinase.